The sequence spans 901 residues: Protein translocase subunit SecA (901 aa).

ATP contacts are provided by residues Q85, 103–107, and D510; that span reads GEGKT. Residues 848 to 901 form a disordered region; it reads RINQNNLPVDENSQTTQNSETEDYSDRRIGRNEPCPCGSGKKYKHCHGSRVARQ. Polar residues predominate over residues 849–866; it reads INQNNLPVDENSQTTQNS. Zn(2+) contacts are provided by C882, C884, C893, and H894. Residues 888–901 show a composition bias toward basic residues; it reads KKYKHCHGSRVARQ.

This sequence belongs to the SecA family. Monomer and homodimer. Part of the essential Sec protein translocation apparatus which comprises SecA, SecYEG and auxiliary proteins SecDF-YajC and YidC. Zn(2+) is required as a cofactor.

Its subcellular location is the cell inner membrane. The protein localises to the cytoplasm. The catalysed reaction is ATP + H2O + cellular proteinSide 1 = ADP + phosphate + cellular proteinSide 2.. Functionally, part of the Sec protein translocase complex. Interacts with the SecYEG preprotein conducting channel. Has a central role in coupling the hydrolysis of ATP to the transfer of proteins into and across the cell membrane, serving both as a receptor for the preprotein-SecB complex and as an ATP-driven molecular motor driving the stepwise translocation of polypeptide chains across the membrane. This is Protein translocase subunit SecA from Haemophilus influenzae (strain 86-028NP).